Consider the following 246-residue polypeptide: Probable phosphatase Tola_0828 (246 aa).

Zn(2+)-binding residues include histidine 8, histidine 10, histidine 16, histidine 41, glutamate 74, histidine 102, histidine 132, aspartate 193, and histidine 195.

Belongs to the PHP family. Zn(2+) is required as a cofactor.

This chain is Probable phosphatase Tola_0828, found in Tolumonas auensis (strain DSM 9187 / NBRC 110442 / TA 4).